The sequence spans 206 residues: Glycerol-3-phosphate acyltransferase (206 aa).

Helical transmembrane passes span 3-23, 47-67, 79-99, 119-139, and 152-172; these read LSLIFILAYLIGSFPSGVIIG, VLGPIAGTAVLFLDILKGTLA, HSLVLVVGLAAVIGHAYSIFL, PLFFVIASTIFISVILITSMV, and ILSFYTHDWLLGTIATLVLIF.

This sequence belongs to the PlsY family. Probably interacts with PlsX.

It is found in the cell membrane. It catalyses the reaction an acyl phosphate + sn-glycerol 3-phosphate = a 1-acyl-sn-glycero-3-phosphate + phosphate. It functions in the pathway lipid metabolism; phospholipid metabolism. Functionally, catalyzes the transfer of an acyl group from acyl-phosphate (acyl-PO(4)) to glycerol-3-phosphate (G3P) to form lysophosphatidic acid (LPA). This enzyme utilizes acyl-phosphate as fatty acyl donor, but not acyl-CoA or acyl-ACP. This is Glycerol-3-phosphate acyltransferase from Latilactobacillus sakei subsp. sakei (strain 23K) (Lactobacillus sakei subsp. sakei).